We begin with the raw amino-acid sequence, 312 residues long: Putative tricarboxylate transport protein, mitochondrial (312 aa).

3 Solcar repeats span residues 23–111, 122–208, and 218–303; these read EKTV…LKSQ, VMRL…LKDW, and ISKP…IIEF. A run of 6 helical transmembrane segments spans residues 29–49, 75–95, 126–146, 164–184, 221–241, and 286–306; these read IVIGGITGGIEICITFPTEYV, VNGHGFFGLYRGLSVLLYGSI, LCGLGAGLSEAVFAVTPMETV, FVHGVGCIVKAEGLGGIYKGV, PIVGLMGAVAGAASVYGNTPI, and VCLDVGITFMIYDSIIEFLDV.

It belongs to the mitochondrial carrier (TC 2.A.29) family.

It localises to the mitochondrion inner membrane. Functionally, transport of citrate across inner mitochondrial membrane. The polypeptide is Putative tricarboxylate transport protein, mitochondrial (Caenorhabditis elegans).